The sequence spans 224 residues: uncharacterized protein (224 aa).

This is an uncharacterized protein from Mycobacterium tuberculosis (strain ATCC 25618 / H37Rv).